The sequence spans 839 residues: Sodium/hydrogen exchanger 3 (839 aa).

Positions 1–32 (MPLGVRGTRREFRFPVWGLLLLALWMLPRALG) are cleaved as a signal peptide. Topologically, residues 33 to 56 (VEEIPGPDSHEKQGFQIVTFKWHH) are extracellular. A helical transmembrane segment spans residues 57 to 79 (VQDPYIIALWILVASLAKIVFHL). Residues 80–87 (SHKVTSVV) are Cytoplasmic-facing. Residues 88–107 (PESALLIVLGLILGGIVWAA) form a helical membrane-spanning segment. Over 108–116 (DHIASFTLT) the chain is Extracellular. A helical transmembrane segment spans residues 117-134 (PTVFFFYLLPPIVLDAGY). Over 135–137 (FMP) the chain is Cytoplasmic. Residues 138 to 173 (NRLFFGNLGTILLYAVIGTVWNAATTGLSLYGVYLS) traverse the membrane as a helical segment. The a 1,2-diacyl-sn-glycero-3-phospho-(1D-myo-inositol) site is built by Gly-143, Gly-146, and Thr-147. Topologically, residues 174–186 (GIMGDLSIGLLDF) are extracellular. A helical transmembrane segment spans residues 187 to 208 (LLFGSLIAAVDPVAVLAVFEEV). Over 209–210 (HV) the chain is Cytoplasmic. A helical transmembrane segment spans residues 211 to 242 (NDVLFIIVFGESLLNDAVTVVLYNVFDSFVSL). The Extracellular segment spans residues 243–249 (GADKVTG). Residues 250–284 (VDCVKGIVSFFVVSLGGTLIGIIFAFLLSLVTRFT) traverse the membrane as a helical segment. Residues 285–286 (KH) are Cytoplasmic-facing. Residues 287 to 309 (VRIIEPGFVFIISYLSYLTSEML) form a helical membrane-spanning segment. The Extracellular portion of the chain corresponds to 310-311 (SL). The helical transmembrane segment at 312–328 (SAILAITFCGICCQKYV) threads the bilayer. Residues 329–335 (KANISEQ) are Cytoplasmic-facing. Residues 336–364 (SATTVRYTMKMLASGAETIIFMFLGISAV) form a helical membrane-spanning segment. Residues 365–372 (DPAIWTWN) are Extracellular-facing. The helical transmembrane segment at 373-394 (TAFILLTLVFISVYRAIGVVLQ) threads the bilayer. Residues 395–407 (TWLLNKYRMVQLE) are Cytoplasmic-facing. Met-403 serves as a coordination point for a 1,2-diacyl-sn-glycero-3-phospho-(1D-myo-inositol). A helical transmembrane segment spans residues 408–431 (IIDQVVMSYGGLRGAVAYALVVLL). The Extracellular portion of the chain corresponds to 432 to 438 (DEKKVKE). The chain crosses the membrane as a helical span at residues 439–472 (KNLFVSTTIIVVFFTVIFQGLTIKPLVQWLKVKK). The Cytoplasmic segment spans residues 473 to 839 (SEHREPKLNE…RSFLPESTHM (367 aa)). 3 residues coordinate a 1,2-diacyl-sn-glycero-3-phospho-(1D-myo-inositol): Gln-502, Ile-503, and His-505. Phosphoserine is present on residues Ser-560 and Ser-568. An interaction with EZR region spans residues 581–595 (RPSTVEASVSYLLRE). An interaction with NHERF4 region spans residues 596–673 (NVSTVCLDMQ…RKRLESFKST (78 aa)). An interaction with AHCYL1 region spans residues 597–701 (VSTVCLDMQA…GQKRRNSSIP (105 aa)). 2 positions are modified to phosphoserine: Ser-598 and Ser-613. Position 669 is a phosphoserine; by SGK1 (Ser-669). Residues 688–697 (KRERGQKRRN) show a composition bias toward basic residues. The interval 688–710 (KRERGQKRRNSSIPNGKIPMESP) is disordered. 3 positions are modified to phosphoserine: Ser-724, Ser-815, and Ser-818.

Belongs to the monovalent cation:proton antiporter 1 (CPA1) transporter (TC 2.A.36) family. Homodimer. Found in the forms of complex and dynamic macromolecular complexes. Binds NHERF1 and NHERF2. Interacts with CHP1, CHP2 and SHANK2. Interacts with NHERF4 and interactions decrease in response to elevated calcium ion levels. Interacts with PDZK1 (via C-terminal PDZ domain). Interacts with AHCYL1; the interaction is required for SLC9A3 activity. Interacts with EZR; interaction targets SLC9A3 to the apical membrane. Interacts with SNX27 (via PDZ domains); directs SLC9A3 membrane insertion from early endosomes to the plasma membrane. Phosphorylated by PKA, which inhibits activity. Phosphorylation at Ser-669 by SGK1 is associated with increased abundance at the cell membrane.

It localises to the apical cell membrane. Its subcellular location is the cell membrane. The protein localises to the recycling endosome membrane. It is found in the early endosome membrane. It carries out the reaction Na(+)(in) + H(+)(out) = Na(+)(out) + H(+)(in). With respect to regulation, seems to switch between active and inactive modes in response to various stimuli. Activated directly or indirectly by membrane phosphatidylinositol (PIs). Regulated by a variety of auxiliary proteins, which facilitate the maturation, cell surface expression and function of the transporter. Inhibited specifically by the drug tenapanor. Its function is as follows. Plasma membrane Na(+)/H(+) antiporter. Exchanges intracellular H(+) ions for extracellular Na(+) in 1:1 stoichiometry, playing a key role in salt and fluid absorption and pH homeostasis. Major apical Na(+)/H(+) exchanger in kidney and intestine playing an important role in renal and intestine Na(+) absorption and blood pressure regulation. This is Sodium/hydrogen exchanger 3 (SLC9A3) from Didelphis virginiana (North American opossum).